A 42-amino-acid chain; its full sequence is Photosystem I reaction center subunit IX (42 aa).

The chain crosses the membrane as a helical span at residues 7–27 (YLSVAPVLSTLWFGALAGLLI).

It belongs to the PsaJ family.

The protein resides in the plastid. It localises to the chloroplast thylakoid membrane. May help in the organization of the PsaE and PsaF subunits. The polypeptide is Photosystem I reaction center subunit IX (Platanus occidentalis (Sycamore)).